Here is a 284-residue protein sequence, read N- to C-terminus: L-ribulose-5-phosphate 3-epimerase UlaE (284 aa).

It belongs to the L-ribulose-5-phosphate 3-epimerase family.

The catalysed reaction is L-ribulose 5-phosphate = L-xylulose 5-phosphate. The protein operates within cofactor degradation; L-ascorbate degradation; D-xylulose 5-phosphate from L-ascorbate: step 3/4. In terms of biological role, catalyzes the isomerization of L-xylulose-5-phosphate to L-ribulose-5-phosphate. Is involved in the anaerobic L-ascorbate utilization. The polypeptide is L-ribulose-5-phosphate 3-epimerase UlaE (Escherichia coli O127:H6 (strain E2348/69 / EPEC)).